The chain runs to 268 residues: Putative hydro-lyase A1S_1268 (268 aa).

The protein belongs to the D-glutamate cyclase family.

In Acinetobacter baumannii (strain ATCC 17978 / DSM 105126 / CIP 53.77 / LMG 1025 / NCDC KC755 / 5377), this protein is Putative hydro-lyase A1S_1268.